Reading from the N-terminus, the 150-residue chain is Protein SLM6 (150 aa).

The Extracellular segment spans residues 1-76 (MCSRFSSTSL…SLLRSGVFPS (76 aa)). A helical membrane pass occupies residues 77 to 97 (WLFCMFSSILALAISNSFFFF). The Cytoplasmic segment spans residues 98-104 (SSNACFS). The helical transmembrane segment at 105–125 (LLFNSFLVTGFSFSADLLVLA) threads the bilayer. The Extracellular segment spans residues 126-150 (AAADTLESNVSNDIGGNCATRLFKL).

It localises to the membrane. The sequence is that of Protein SLM6 from Saccharomyces cerevisiae (strain ATCC 204508 / S288c) (Baker's yeast).